The primary structure comprises 953 residues: Isoleucine--tRNA ligase (953 aa).

The 'HIGH' region motif lies at 57-67 (PYANGDIHIGH). L-isoleucyl-5'-AMP is bound at residue E582. The 'KMSKS' region signature appears at 623 to 627 (KMSKS). An ATP-binding site is contributed by K626. Zn(2+) contacts are provided by C916, C919, C936, and C939.

Belongs to the class-I aminoacyl-tRNA synthetase family. IleS type 1 subfamily. Monomer. The cofactor is Zn(2+).

The protein resides in the cytoplasm. The enzyme catalyses tRNA(Ile) + L-isoleucine + ATP = L-isoleucyl-tRNA(Ile) + AMP + diphosphate. Catalyzes the attachment of isoleucine to tRNA(Ile). As IleRS can inadvertently accommodate and process structurally similar amino acids such as valine, to avoid such errors it has two additional distinct tRNA(Ile)-dependent editing activities. One activity is designated as 'pretransfer' editing and involves the hydrolysis of activated Val-AMP. The other activity is designated 'posttransfer' editing and involves deacylation of mischarged Val-tRNA(Ile). This Bordetella avium (strain 197N) protein is Isoleucine--tRNA ligase.